The sequence spans 227 residues: 7-cyano-7-deazaguanine synthase (227 aa).

Residue 8–18 (FSGGQDSTTCL) participates in ATP binding. The Zn(2+) site is built by Cys-187, Cys-196, Cys-199, and Cys-202.

The protein belongs to the QueC family. Zn(2+) is required as a cofactor.

The enzyme catalyses 7-carboxy-7-deazaguanine + NH4(+) + ATP = 7-cyano-7-deazaguanine + ADP + phosphate + H2O + H(+). Its pathway is purine metabolism; 7-cyano-7-deazaguanine biosynthesis. In terms of biological role, catalyzes the ATP-dependent conversion of 7-carboxy-7-deazaguanine (CDG) to 7-cyano-7-deazaguanine (preQ(0)). The sequence is that of 7-cyano-7-deazaguanine synthase from Aliivibrio fischeri (strain ATCC 700601 / ES114) (Vibrio fischeri).